Here is a 362-residue protein sequence, read N- to C-terminus: 3-dehydroquinate synthase (362 aa).

Residues 71–76 (DGEQYK), 105–109 (GVVGD), 129–130 (TT), lysine 142, lysine 151, and 169–172 (CLKT) each bind NAD(+). Residues glutamate 184, histidine 247, and histidine 264 each contribute to the Zn(2+) site.

The protein belongs to the sugar phosphate cyclases superfamily. Dehydroquinate synthase family. The cofactor is NAD(+). Co(2+) serves as cofactor. It depends on Zn(2+) as a cofactor.

Its subcellular location is the cytoplasm. The enzyme catalyses 7-phospho-2-dehydro-3-deoxy-D-arabino-heptonate = 3-dehydroquinate + phosphate. It functions in the pathway metabolic intermediate biosynthesis; chorismate biosynthesis; chorismate from D-erythrose 4-phosphate and phosphoenolpyruvate: step 2/7. In terms of biological role, catalyzes the conversion of 3-deoxy-D-arabino-heptulosonate 7-phosphate (DAHP) to dehydroquinate (DHQ). The protein is 3-dehydroquinate synthase of Escherichia coli O157:H7.